We begin with the raw amino-acid sequence, 232 residues long: Flagellar L-ring protein (232 aa).

The N-terminal stretch at 1-15 (MKKVLFYVLPFAFFG) is a signal peptide. Cys16 carries the N-palmitoyl cysteine lipid modification. Cys16 is lipidated: S-diacylglycerol cysteine.

It belongs to the FlgH family. As to quaternary structure, the basal body constitutes a major portion of the flagellar organelle and consists of four rings (L,P,S, and M) mounted on a central rod.

It localises to the cell outer membrane. The protein resides in the bacterial flagellum basal body. Functionally, assembles around the rod to form the L-ring and probably protects the motor/basal body from shearing forces during rotation. The polypeptide is Flagellar L-ring protein (Campylobacter jejuni subsp. jejuni serotype O:6 (strain 81116 / NCTC 11828)).